We begin with the raw amino-acid sequence, 511 residues long: Cytochrome P450 714C3 (511 aa).

The Lumenal portion of the chain corresponds to 1–6; that stretch reads MEKLLA. The chain crosses the membrane as a helical; Signal-anchor for type III membrane protein span at residues 7-27; it reads LIVVLVILLSLALFYLCNILW. Topologically, residues 28–511 are cytoplasmic; the sequence is LRAVKIRKKL…GLPLMVTKLP (484 aa). Residue Cys-458 coordinates heme.

This sequence belongs to the cytochrome P450 family. Requires heme as cofactor.

It localises to the membrane. This Oryza sativa subsp. japonica (Rice) protein is Cytochrome P450 714C3 (CYP714C3).